The sequence spans 228 residues: Prolactin (228 aa).

The signal sequence occupies residues 1 to 29; sequence MGTKRSSLKGSLLLLLLMSSLFLFKSVES. Cys33 and Cys40 form a disulfide bridge. Residues Ser55, Ser63, and Ser119 each carry the phosphoserine modification. 2 cysteine pairs are disulfide-bonded: Cys87/Cys203 and Cys220/Cys228.

This sequence belongs to the somatotropin/prolactin family. Interacts with PRLR.

It is found in the secreted. In terms of biological role, prolactin acts primarily on the mammary gland by promoting lactation, mammogenesis, mitogenesis and osmoregulation. This chain is Prolactin (PRL), found in Trichosurus vulpecula (Brush-tailed possum).